The primary structure comprises 528 residues: GMP synthase [glutamine-hydrolyzing] (528 aa).

The Glutamine amidotransferase type-1 domain maps to 13 to 204; sequence AIVILDFGSQ…VYDICSCEPD (192 aa). Cys90 functions as the Nucleophile in the catalytic mechanism. Residues His178 and Glu180 contribute to the active site. In terms of domain architecture, GMPS ATP-PPase spans 205-403; the sequence is WTTNLFIDEA…LGLPDEIVRR (199 aa). 232–238 contacts ATP; sequence SGGVDSS.

In terms of assembly, homodimer.

It carries out the reaction XMP + L-glutamine + ATP + H2O = GMP + L-glutamate + AMP + diphosphate + 2 H(+). The protein operates within purine metabolism; GMP biosynthesis; GMP from XMP (L-Gln route): step 1/1. Functionally, catalyzes the synthesis of GMP from XMP. This chain is GMP synthase [glutamine-hydrolyzing], found in Prochlorococcus marinus (strain NATL1A).